The primary structure comprises 130 residues: Cholecystokinin (130 aa).

The first 20 residues, 1-20 (MYGGICICVLLAALSVSSLG), serve as a signal peptide directing secretion. Residues 21 to 48 (QQPAGSHDGSPVAAELQQSLTEPHRHSR) constitute a propeptide that is removed on maturation. The tract at residues 21–63 (QQPAGSHDGSPVAAELQQSLTEPHRHSRAPSSAGPLKPAPRLD) is disordered. Residue Y112 is modified to Sulfotyrosine. F118 is modified (phenylalanine amide). Positions 122 to 130 (SAEEYEYSS) are excised as a propeptide. A sulfotyrosine mark is found at Y126 and Y128.

This sequence belongs to the gastrin/cholecystokinin family. In terms of processing, the precursor is cleaved by proteases to produce a number of active cholecystokinins. As to expression, in the small intestine, the major production site is around the vitelline diverticulum.

The protein localises to the secreted. Functionally, this peptide hormone induces gall bladder contraction and the release of pancreatic enzymes in the gut. Its function in the brain is not clear. It also decreases food intake and regulates gastrointestinal physiological processes. In Gallus gallus (Chicken), this protein is Cholecystokinin (CCK).